Consider the following 977-residue polypeptide: ELMO domain-containing protein A (977 aa).

The 179-residue stretch at 383 to 561 (EHDALLMKLW…SVKNLIITAL (179 aa)) folds into the ELMO domain. Low complexity-rich tracts occupy residues 792-838 (SSNN…NNSG) and 852-897 (QQQQ…SSSS). The tract at residues 792–899 (SSNNNIKDNL…SSSSSSSSNP (108 aa)) is disordered.

Associates with mhcA.

In terms of biological role, functions as a negative regulator of actin polymerization. Modulates actin/myosin II at cortex actinomyosins to prevent excessive F-actin polymerization around the cell periphery, thereby maintaining proper cell shape during phagocytosis and chemotaxis. This chain is ELMO domain-containing protein A (elmoA), found in Dictyostelium discoideum (Social amoeba).